The sequence spans 369 residues: UDP-N-acetylglucosamine--N-acetylmuramyl-(pentapeptide) pyrophosphoryl-undecaprenol N-acetylglucosamine transferase (369 aa).

UDP-N-acetyl-alpha-D-glucosamine-binding positions include 10–12 (TGG), Asn124, Arg166, Ser196, and Gln300.

It belongs to the glycosyltransferase 28 family. MurG subfamily.

It localises to the cell membrane. The catalysed reaction is di-trans,octa-cis-undecaprenyl diphospho-N-acetyl-alpha-D-muramoyl-L-alanyl-D-glutamyl-meso-2,6-diaminopimeloyl-D-alanyl-D-alanine + UDP-N-acetyl-alpha-D-glucosamine = di-trans,octa-cis-undecaprenyl diphospho-[N-acetyl-alpha-D-glucosaminyl-(1-&gt;4)]-N-acetyl-alpha-D-muramoyl-L-alanyl-D-glutamyl-meso-2,6-diaminopimeloyl-D-alanyl-D-alanine + UDP + H(+). It participates in cell wall biogenesis; peptidoglycan biosynthesis. Functionally, cell wall formation. Catalyzes the transfer of a GlcNAc subunit on undecaprenyl-pyrophosphoryl-MurNAc-pentapeptide (lipid intermediate I) to form undecaprenyl-pyrophosphoryl-MurNAc-(pentapeptide)GlcNAc (lipid intermediate II). The sequence is that of UDP-N-acetylglucosamine--N-acetylmuramyl-(pentapeptide) pyrophosphoryl-undecaprenol N-acetylglucosamine transferase from Desulfitobacterium hafniense (strain Y51).